The following is a 129-amino-acid chain: MAELIQKKLQGEVEKYQQLQKDLSKSMSGRQKLEAQLTENNIVKEELALLDGSNVVFKLLGPVLVKQELGEARATVGKRLDYITAEIKRYESQLRDLEQQSEQQRETLAQLQQEFQRAQAAKAGAPGKA.

At alanine 2 the chain carries N-acetylalanine. Lysine 21 carries the post-translational modification N6-acetyllysine. Residue lysine 66 is modified to N6-acetyllysine; alternate. A Glycyl lysine isopeptide (Lys-Gly) (interchain with G-Cter in SUMO1); alternate cross-link involves residue lysine 66. Lysine 66 participates in a covalent cross-link: Glycyl lysine isopeptide (Lys-Gly) (interchain with G-Cter in SUMO2); alternate.

Belongs to the prefoldin subunit beta family. In terms of assembly, heterohexamer of two PFD-alpha type and four PFD-beta type subunits. Component of the PAQosome complex which is responsible for the biogenesis of several protein complexes and which consists of R2TP complex members RUVBL1, RUVBL2, RPAP3 and PIH1D1, URI complex members PFDN2, PFDN6, PDRG1, UXT and URI1 as well as ASDURF, POLR2E and DNAAF10/WDR92.

Binds specifically to cytosolic chaperonin (c-CPN) and transfers target proteins to it. Binds to nascent polypeptide chain and promotes folding in an environment in which there are many competing pathways for nonnative proteins. This Bos taurus (Bovine) protein is Prefoldin subunit 6 (PFDN6).